A 521-amino-acid polypeptide reads, in one-letter code: UDP-N-acetylmuramoyl-L-alanyl-D-glutamate--2,6-diaminopimelate ligase (521 aa).

Ser33 provides a ligand contact to UDP-N-acetyl-alpha-D-muramoyl-L-alanyl-D-glutamate. Residue 116–122 coordinates ATP; the sequence is GTNGKTT. Residues 158-159, Ser185, Gln191, and Arg193 each bind UDP-N-acetyl-alpha-D-muramoyl-L-alanyl-D-glutamate; that span reads TT. The residue at position 225 (Lys225) is an N6-carboxylysine. Meso-2,6-diaminopimelate-binding positions include Arg409, 433–436, Gly483, and Glu487; that span reads DNPR. The Meso-diaminopimelate recognition motif motif lies at 433-436; that stretch reads DNPR.

This sequence belongs to the MurCDEF family. MurE subfamily. Mg(2+) is required as a cofactor. Post-translationally, carboxylation is probably crucial for Mg(2+) binding and, consequently, for the gamma-phosphate positioning of ATP.

It is found in the cytoplasm. The catalysed reaction is UDP-N-acetyl-alpha-D-muramoyl-L-alanyl-D-glutamate + meso-2,6-diaminopimelate + ATP = UDP-N-acetyl-alpha-D-muramoyl-L-alanyl-gamma-D-glutamyl-meso-2,6-diaminopimelate + ADP + phosphate + H(+). Its pathway is cell wall biogenesis; peptidoglycan biosynthesis. Its function is as follows. Catalyzes the addition of meso-diaminopimelic acid to the nucleotide precursor UDP-N-acetylmuramoyl-L-alanyl-D-glutamate (UMAG) in the biosynthesis of bacterial cell-wall peptidoglycan. The protein is UDP-N-acetylmuramoyl-L-alanyl-D-glutamate--2,6-diaminopimelate ligase of Nitrosomonas europaea (strain ATCC 19718 / CIP 103999 / KCTC 2705 / NBRC 14298).